Consider the following 292-residue polypeptide: Glutamate racemase (292 aa).

Residues 28-29 and 60-61 contribute to the substrate site; these read DS and YG. Residue C91 is the Proton donor/acceptor of the active site. 92-93 contributes to the substrate binding site; the sequence is NT. C200 acts as the Proton donor/acceptor in catalysis. Residue 201–202 coordinates substrate; it reads TH.

It belongs to the aspartate/glutamate racemases family.

The enzyme catalyses L-glutamate = D-glutamate. The protein operates within cell wall biogenesis; peptidoglycan biosynthesis. Provides the (R)-glutamate required for cell wall biosynthesis. The protein is Glutamate racemase of Nostoc sp. (strain PCC 7120 / SAG 25.82 / UTEX 2576).